The sequence spans 740 residues: Catalase-peroxidase 2 (740 aa).

An N-terminal signal peptide occupies residues 1–27 (MFKKTKPRISILALTISCAIYSGAALA). Residues 106–228 (WHSAGTYRIY…LAAVQMGLIY (123 aa)) constitute a cross-link (tryptophyl-tyrosyl-methioninium (Trp-Tyr) (with M-254)). The active-site Proton acceptor is histidine 107. The segment at residues 228–254 (YVNPEGPNGVPDPLLAAKDIRDTFGRM) is a cross-link (tryptophyl-tyrosyl-methioninium (Tyr-Met) (with W-106)). Histidine 269 is a binding site for heme b.

This sequence belongs to the peroxidase family. Peroxidase/catalase subfamily. Homodimer or homotetramer. The cofactor is heme b. Formation of the three residue Trp-Tyr-Met cross-link is important for the catalase, but not the peroxidase activity of the enzyme.

The catalysed reaction is H2O2 + AH2 = A + 2 H2O. It carries out the reaction 2 H2O2 = O2 + 2 H2O. Its function is as follows. Bifunctional enzyme with both catalase and broad-spectrum peroxidase activity. This Cellvibrio japonicus (strain Ueda107) (Pseudomonas fluorescens subsp. cellulosa) protein is Catalase-peroxidase 2.